The sequence spans 235 residues: Large ribosomal subunit protein uL1 (235 aa).

The protein belongs to the universal ribosomal protein uL1 family. In terms of assembly, part of the 50S ribosomal subunit.

In terms of biological role, binds directly to 23S rRNA. The L1 stalk is quite mobile in the ribosome, and is involved in E site tRNA release. Protein L1 is also a translational repressor protein, it controls the translation of the L11 operon by binding to its mRNA. The polypeptide is Large ribosomal subunit protein uL1 (Mycolicibacterium smegmatis (strain ATCC 700084 / mc(2)155) (Mycobacterium smegmatis)).